The following is a 963-amino-acid chain: Translation initiation factor IF-2 (963 aa).

Positions 53–77 are enriched in basic and acidic residues; it reads SHGQADDSARKKITLTKRETSEIRQ. The disordered stretch occupies residues 53 to 377; that stretch reads SHGQADDSAR…RSNFQAPTEP (325 aa). Polar residues predominate over residues 78–87; it reads SDATGKTRTV. 4 stretches are compositionally biased toward basic and acidic residues: residues 98–110, 123–183, 197–250, and 267–278; these read IKRD…HQAD, EEAR…KAEE, DTSR…EAEA, and PSERKAEEKKAE. Gly residues predominate over residues 343–356; the sequence is SSGGVGGWRGGPRG. One can recognise a tr-type G domain in the interval 463–632; that stretch reads PRPPVVTVMG…SLQAEVLELK (170 aa). Residues 472 to 479 are G1; that stretch reads GHVDHGKT. Residue 472–479 coordinates GTP; sequence GHVDHGKT. The G2 stretch occupies residues 497–501; that stretch reads GITQH. The G3 stretch occupies residues 518–521; that stretch reads DTPG. Residues 518 to 522 and 572 to 575 each bind GTP; these read DTPGH and NKVD. The segment at 572–575 is G4; the sequence is NKVD. Positions 608-610 are G5; the sequence is SAK.

The protein belongs to the TRAFAC class translation factor GTPase superfamily. Classic translation factor GTPase family. IF-2 subfamily.

The protein resides in the cytoplasm. In terms of biological role, one of the essential components for the initiation of protein synthesis. Protects formylmethionyl-tRNA from spontaneous hydrolysis and promotes its binding to the 30S ribosomal subunits. Also involved in the hydrolysis of GTP during the formation of the 70S ribosomal complex. In Cupriavidus taiwanensis (strain DSM 17343 / BCRC 17206 / CCUG 44338 / CIP 107171 / LMG 19424 / R1) (Ralstonia taiwanensis (strain LMG 19424)), this protein is Translation initiation factor IF-2.